Here is a 115-residue protein sequence, read N- to C-terminus: uncharacterized protein (115 aa).

A run of 2 helical transmembrane segments spans residues 15–35 and 52–72; these read FSTQ…EVLF and FDGV…YYSI.

It localises to the membrane. This is an uncharacterized protein from Saccharomyces cerevisiae (strain ATCC 204508 / S288c) (Baker's yeast).